The following is a 957-amino-acid chain: Dystrophin-related protein 2 (957 aa).

2 Spectrin repeats span residues 102 to 179 (DHSG…EELE) and 231 to 337 (EQLL…QLQD). The WW domain occupies 358–383 (WERAISPNKVPYYINHQAQTTCWDHP). The ZZ-type; degenerate zinc-finger motif lies at 605 to 661 (KHQTKCSICRQCPIKGFRYRSLKQFNVDICQTCFLTGRASKGNKLHYPIMEYYTPTT). The Zn(2+) site is built by C610, C613, C634, and C637. Phosphoserine is present on S748. Low complexity predominate over residues 877–900 (PPTESDGSGSAGSSLASSPQQSEG). The tract at residues 877 to 923 (PPTESDGSGSAGSSLASSPQQSEGSHPREKGQTTPDTEAADDVGSKS) is disordered. T910 is modified (phosphothreonine).

As to quaternary structure, interacts with PRX; this enhances phosphorylation. Identified in a dystroglycan complex that contains at least PRX, DRP2, UTRN, DMD and DAG1. Detected in fetal brain.

The protein resides in the postsynaptic density. Its subcellular location is the cell projection. It localises to the dendrite. It is found in the perikaryon. The protein localises to the cell membrane. Functionally, required for normal myelination and for normal organization of the cytoplasm and the formation of Cajal bands in myelinating Schwann cells. Required for normal PRX location at appositions between the abaxonal surface of the myelin sheath and the Schwann cell plasma membrane. Possibly involved in membrane-cytoskeleton interactions of the central nervous system. This chain is Dystrophin-related protein 2 (DRP2), found in Homo sapiens (Human).